A 91-amino-acid polypeptide reads, in one-letter code: Antitoxin RelJ (91 aa).

The protein belongs to the phD/YefM antitoxin family. In terms of assembly, homodimer.

In terms of biological role, antitoxin component of a type II toxin-antitoxin (TA) system. A probable antitoxin for the putative mRNA interferase RelK. In Mycobacterium tuberculosis (strain CDC 1551 / Oshkosh), this protein is Antitoxin RelJ (relJ).